A 126-amino-acid chain; its full sequence is Histone H2B type 2-E (126 aa).

Over residues 1-12 (MPEPAKSAPAPK) the composition is skewed to low complexity. Positions 1 to 35 (MPEPAKSAPAPKKGSKKAVTKAQKKDGKKRKRSRK) are disordered. N-acetylproline is present on P2. E3 bears the ADP-ribosyl glutamic acid mark. K6 is subject to N6-(2-hydroxyisobutyryl)lysine; alternate. K6 carries the post-translational modification N6-(beta-hydroxybutyryl)lysine; alternate. K6 is subject to N6-acetyllysine; alternate. Residue K6 is modified to N6-butyryllysine; alternate. Residue K6 is modified to N6-crotonyllysine; alternate. K6 carries the post-translational modification N6-lactoyllysine; alternate. Residue K6 forms a Glycyl lysine isopeptide (Lys-Gly) (interchain with G-Cter in SUMO2); alternate linkage. S7 carries the post-translational modification ADP-ribosylserine. At K12 the chain carries N6-(beta-hydroxybutyryl)lysine; alternate. N6-acetyllysine; alternate is present on residues K12 and K13. N6-crotonyllysine; alternate occurs at positions 12 and 13. An N6-lactoyllysine; alternate modification is found at K12. Residue K13 is modified to N6-(2-hydroxyisobutyryl)lysine; alternate. S15 carries the phosphoserine; by STK4/MST1 modification. Residues K16, K17, K21, and K24 each carry the N6-acetyllysine; alternate modification. 4 positions are modified to N6-crotonyllysine; alternate: K16, K17, K21, and K24. Residues K16, K17, K21, and K24 each carry the N6-lactoyllysine; alternate modification. Residues K17 and K21 each carry the N6-(beta-hydroxybutyryl)lysine; alternate modification. K17 carries the N6-glutaryllysine; alternate modification. N6-(2-hydroxyisobutyryl)lysine; alternate is present on residues K21 and K24. N6-butyryllysine; alternate is present on K21. K21 participates in a covalent cross-link: Glycyl lysine isopeptide (Lys-Gly) (interchain with G-Cter in SUMO2); alternate. N6-(2-hydroxyisobutyryl)lysine is present on K25. At K35 the chain carries N6-(2-hydroxyisobutyryl)lysine; alternate. K35 carries the post-translational modification N6-(beta-hydroxybutyryl)lysine; alternate. K35 bears the N6-crotonyllysine; alternate mark. K35 bears the N6-glutaryllysine; alternate mark. The residue at position 35 (K35) is an N6-succinyllysine; alternate. K35 is covalently cross-linked (Glycyl lysine isopeptide (Lys-Gly) (interchain with G-Cter in ubiquitin); alternate). E36 is subject to PolyADP-ribosyl glutamic acid. S37 bears the Phosphoserine; by AMPK mark. Residues K44, K47, and K58 each carry the N6-(2-hydroxyisobutyryl)lysine; alternate modification. The residue at position 44 (K44) is an N6-lactoyllysine; alternate. Residues K44 and K47 each carry the N6-glutaryllysine; alternate modification. N6-methyllysine; alternate is present on K47. The residue at position 58 (K58) is an N6,N6-dimethyllysine; alternate. A Dimethylated arginine modification is found at R80. N6-(2-hydroxyisobutyryl)lysine; alternate is present on K86. K86 is modified (N6-(beta-hydroxybutyryl)lysine; alternate). K86 bears the N6-acetyllysine; alternate mark. K86 is modified (N6-lactoyllysine; alternate). At K86 the chain carries N6,N6,N6-trimethyllysine; alternate. Omega-N-methylarginine is present on residues R87 and R93. K109 bears the N6-(2-hydroxyisobutyryl)lysine; alternate mark. K109 bears the N6-lactoyllysine; alternate mark. An N6-glutaryllysine; alternate modification is found at K109. An N6-methyllysine; alternate modification is found at K109. A glycan (O-linked (GlcNAc) serine) is linked at S113. A Phosphothreonine modification is found at T116. K117 and K121 each carry N6-(2-hydroxyisobutyryl)lysine; alternate. Residues K117 and K121 each carry the N6-(beta-hydroxybutyryl)lysine; alternate modification. N6-lactoyllysine; alternate is present on residues K117 and K121. An N6-glutaryllysine; alternate mark is found at K117 and K121. 2 positions are modified to N6-succinyllysine; alternate: K117 and K121. K117 is modified (N6-malonyllysine; alternate). The residue at position 117 (K117) is an N6-methylated lysine; alternate. Residue K121 forms a Glycyl lysine isopeptide (Lys-Gly) (interchain with G-Cter in ubiquitin); alternate linkage.

Belongs to the histone H2B family. The nucleosome is a histone octamer containing two molecules each of H2A, H2B, H3 and H4 assembled in one H3-H4 heterotetramer and two H2A-H2B heterodimers. The octamer wraps approximately 147 bp of DNA. Monoubiquitination at Lys-35 (H2BK34Ub) by the MSL1/MSL2 dimer is required for histone H3 'Lys-4' (H3K4me) and 'Lys-79' (H3K79me) methylation and transcription activation at specific gene loci, such as HOXA9 and MEIS1 loci. Similarly, monoubiquitination at Lys-121 (H2BK120Ub) by the RNF20/40 complex gives a specific tag for epigenetic transcriptional activation and is also prerequisite for histone H3 'Lys-4' and 'Lys-79' methylation. It also functions cooperatively with the FACT dimer to stimulate elongation by RNA polymerase II. H2BK120Ub also acts as a regulator of mRNA splicing: deubiquitination by USP49 is required for efficient cotranscriptional splicing of a large set of exons. In terms of processing, phosphorylation at Ser-37 (H2BS36ph) by AMPK in response to stress promotes transcription. Phosphorylated on Ser-15 (H2BS14ph) by STK4/MST1 during apoptosis; which facilitates apoptotic chromatin condensation. Also phosphorylated on Ser-15 in response to DNA double strand breaks (DSBs), and in correlation with somatic hypermutation and immunoglobulin class-switch recombination. Post-translationally, glcNAcylation at Ser-113 promotes monoubiquitination of Lys-121. It fluctuates in response to extracellular glucose, and associates with transcribed genes. ADP-ribosylated by PARP1 or PARP2 on Ser-7 (H2BS6ADPr) in response to DNA damage. H2BS6ADPr promotes recruitment of CHD1L. Mono-ADP-ribosylated on Glu-3 (H2BE2ADPr) by PARP3 in response to single-strand breaks. Poly ADP-ribosylation on Glu-36 (H2BE35ADPr) by PARP1 regulates adipogenesis: it inhibits phosphorylation at Ser-37 (H2BS36ph), thereby blocking expression of pro-adipogenetic genes. In terms of processing, crotonylation (Kcr) is specifically present in male germ cells and marks testis-specific genes in post-meiotic cells, including X-linked genes that escape sex chromosome inactivation in haploid cells. Crotonylation marks active promoters and enhancers and confers resistance to transcriptional repressors. It is also associated with post-meiotically activated genes on autosomes. Post-translationally, lactylated in macrophages by EP300/P300 by using lactoyl-CoA directly derived from endogenous or exogenous lactate, leading to stimulates gene transcription.

It is found in the nucleus. The protein localises to the chromosome. Functionally, core component of nucleosome. Nucleosomes wrap and compact DNA into chromatin, limiting DNA accessibility to the cellular machineries which require DNA as a template. Histones thereby play a central role in transcription regulation, DNA repair, DNA replication and chromosomal stability. DNA accessibility is regulated via a complex set of post-translational modifications of histones, also called histone code, and nucleosome remodeling. In terms of biological role, has broad antibacterial activity. May contribute to the formation of the functional antimicrobial barrier of the colonic epithelium, and to the bactericidal activity of amniotic fluid. In Homo sapiens (Human), this protein is Histone H2B type 2-E.